Here is a 995-residue protein sequence, read N- to C-terminus: Polyprotein nsP1234 (995 aa).

Residues G30 and F32 each contribute to the ADP-D-ribose site. Residues C180, C182, C205, and C223 each coordinate Zn(2+). Short sequence motifs (FGDF; binding to host G3BP1) lie at residues 347-350 (FGDL) and 364-367 (FGDF). Residues 749-864 (DAVLETDIAS…HGVKSDKLLA (116 aa)) form the RdRp catalytic domain.

As to quaternary structure, interacts with mRNA-capping enzyme nsP1. Interacts with host DDX1. Interacts with host DDX3. Interacts (via C-terminus) with host G3BP1; this interaction inhibits the formation of host stress granules on viral mRNAs and the nsp3-G3BP1 complexes bind viral RNAs and probably orchestrate the assembly of viral replication complexes. Interacts (via C-terminus) with host G3BP2; this interaction inhibits the formation of host stress granules on viral mRNAs and the nsp3-G3BP2 complexes bind viral RNAs and probably orchestrate the assembly of viral replication complexes. Interacts with mRNA-capping enzyme nsP1. Interacts with protease nsP2. interacts with itself. Mg(2+) serves as cofactor. It depends on Mn(2+) as a cofactor. Polyprotein P1234: Specific enzymatic cleavages in vivo yield mature proteins. The processing of the polyprotein is temporally regulated. In early stages (1.7 hpi), P1234 is first cleaved in trans through its nsP2 protease activity, releasing P123' and nsP4, which associate to form the early replication complex. At the same time, P1234 is also cut at the nsP1/nsP2 site early in infection but with lower efficiency. After replication of the viral minus-strand RNAs (4 hpi), the polyproteins are cut at the nsP1/nsP2 and nsP2/nsP3 sites very efficiently, preventing accumulation of P123' and P1234 and allowing the formation of the late replication complex. NsP3'/nsP4 site is not cleaved anymore and P34 is produced rather than nsP4. In terms of processing, specific enzymatic cleavages in vivo yield mature proteins. The processing of the polyprotein is temporally regulated. In early stages (1.7 hpi), P123 is cleaved at the nsP1/nsP2 site with low efficiency. After replication of the viral minus-strand RNAs (4 hpi), the polyproteins are cut at the nsP1/nsP2 and nsP2/nsP3 sites very efficiently, preventing accumulation of P123 and allowing the formation of the late replication complex. Post-translationally, specific enzymatic cleavages in vivo yield mature proteins. The processing of the polyprotein is temporally regulated. In early stages (1.7 hpi), P123' is cleaved at the nsP1/nsP2 site with low efficiency. After replication of the viral minus-strand RNAs (4 hpi), the polyproteins are cut at the nsP1/nsP2 and nsP2/nsP3 sites very efficiently, preventing accumulation of P123' and allowing the formation of the late replication complex. Phosphorylated by host on serines and threonines. In terms of processing, ubiquitinated; targets the protein for rapid degradation via the ubiquitin system. Nsp4 is present in extremely low quantities due to low frequency of translation through the amber stop-codon and the degradation by the ubiquitin pathway.

It localises to the host cytoplasmic vesicle membrane. The catalysed reaction is RNA(n) + a ribonucleoside 5'-triphosphate = RNA(n+1) + diphosphate. It catalyses the reaction RNA(n) + ATP = RNA(n)-3'-adenine ribonucleotide + diphosphate. It carries out the reaction 4-O-(ADP-D-ribosyl)-L-aspartyl-[protein] + H2O = L-aspartyl-[protein] + ADP-D-ribose + H(+). The enzyme catalyses 5-O-(ADP-D-ribosyl)-L-glutamyl-[protein] + H2O = L-glutamyl-[protein] + ADP-D-ribose + H(+). The catalysed reaction is ADP-alpha-D-ribose 1''-phosphate + H2O = ADP-D-ribose + phosphate. In terms of biological role, polyprotein P1234: Inactive precursor of the viral replicase, which is activated by cleavages carried out by the viral protease nsP2. Functionally, the early replication complex formed by the polyprotein P123 and nsP4 synthesizes minus-strand RNAs. As soon P123 is cleaved into mature proteins, the plus-strand RNAs synthesis begins. Its function is as follows. The early replication complex formed by the polyprotein P123' and nsP4 synthesizes minus-strand RNAs. Polyprotein P123' is a short-lived polyprotein that accumulates during early stage of infection. As soon P123' is cleaved into mature proteins, the plus-strand RNAs synthesis begins. Seems to be essential for minus-strand RNAs and subgenomic 26S mRNAs synthesis. Displays mono-ADP-ribosylhydrolase activity. ADP-ribosylation is a post-translational modification that controls various processes of the host cell and the virus probably needs to revert it for optimal viral replication. Binds proteins of FXR family and sequesters them into the viral RNA replication complexes thereby inhibiting the formation of host stress granules on viral mRNAs. The nsp3'-FXR complexes bind viral RNAs and probably orchestrate the assembly of viral replication complexes, thanks to the ability of FXR family members to self-assemble and bind DNA. In terms of biological role, seems to be essential for minus-strand RNAs and subgenomic 26S mRNAs synthesis. Displays mono-ADP-ribosylhydrolase activity. ADP-ribosylation is a post-translantional modification that controls various processes of the host cell and the virus probably needs to revert it for optimal viral replication. Binds proteins of G3BP family and sequesters them into the viral RNA replication complexes thereby inhibiting the formation of host stress granules on viral mRNAs. The nsp3-G3BP complexes bind viral RNAs and probably orchestrate the assembly of viral replication complexes, thanks to the ability of G3BP family members to self-assemble and bind DNA. Functionally, RNA dependent RNA polymerase. Replicates genomic and antigenomic RNA by recognizing replications specific signals. The early replication complex formed by the polyprotein P123 and nsP4 synthesizes minus-strand RNAs. The late replication complex composed of fully processed nsP1-nsP4 is responsible for the production of genomic and subgenomic plus-strand RNAs. The core catalytic domain of nsP4 also possesses terminal adenylyltransferase (TATase) activity that is probably involved in maintenance and repair of the poly(A) tail, an element required for replication of the viral genome. The protein is Polyprotein nsP1234 of Middelburg virus.